Here is a 643-residue protein sequence, read N- to C-terminus: Threonine--tRNA ligase (643 aa).

The 61-residue stretch at 1-61 folds into the TGS domain; the sequence is MIEIFIEDLN…NQSGNLKFLK (61 aa). Residues 246-539 are catalytic; it reads DHRKIGKDLE…LLEHYAGFLP (294 aa). 3 residues coordinate Zn(2+): Cys-339, His-390, and His-516.

This sequence belongs to the class-II aminoacyl-tRNA synthetase family. Homodimer. It depends on Zn(2+) as a cofactor.

The protein localises to the cytoplasm. It carries out the reaction tRNA(Thr) + L-threonine + ATP = L-threonyl-tRNA(Thr) + AMP + diphosphate + H(+). Its function is as follows. Catalyzes the attachment of threonine to tRNA(Thr) in a two-step reaction: L-threonine is first activated by ATP to form Thr-AMP and then transferred to the acceptor end of tRNA(Thr). Also edits incorrectly charged L-seryl-tRNA(Thr). The polypeptide is Threonine--tRNA ligase (Sulfurihydrogenibium sp. (strain YO3AOP1)).